The primary structure comprises 219 residues: UPF0126 membrane protein SCO5481 (219 aa).

6 helical membrane-spanning segments follow: residues 10–30 (VQHTLDLVGIFVFAISGALLA), 34–54 (NFDVFGIAVLAEVTALGGGLF), 66–86 (AFTDLGYFLTPLLATLLVFFL), 93–113 (LQTGVNIFDAAGLGLFCVAGT), 120–140 (GLGLTASACLGLTTAVGGGVL), and 158–178 (LYAVPAIVGSAMVALCIRYEA).

This sequence belongs to the UPF0126 family.

It localises to the cell membrane. The chain is UPF0126 membrane protein SCO5481 from Streptomyces coelicolor (strain ATCC BAA-471 / A3(2) / M145).